The following is a 412-amino-acid chain: Argininosuccinate synthase (412 aa).

Residues 20 to 28 (AYSGGLDTS) and Ala48 contribute to the ATP site. L-citrulline-binding residues include Tyr100 and Ser105. Residue Gly130 participates in ATP binding. Residues Thr132, Asn136, and Asp137 each coordinate L-aspartate. Asn136 provides a ligand contact to L-citrulline. 5 residues coordinate L-citrulline: Arg140, Ser189, Ser198, Glu274, and Tyr286.

It belongs to the argininosuccinate synthase family. Type 1 subfamily. Homotetramer.

The protein localises to the cytoplasm. It carries out the reaction L-citrulline + L-aspartate + ATP = 2-(N(omega)-L-arginino)succinate + AMP + diphosphate + H(+). It participates in amino-acid biosynthesis; L-arginine biosynthesis; L-arginine from L-ornithine and carbamoyl phosphate: step 2/3. The protein is Argininosuccinate synthase of Shewanella pealeana (strain ATCC 700345 / ANG-SQ1).